A 671-amino-acid polypeptide reads, in one-letter code: Acetyl-coenzyme A synthetase (671 aa).

Residues 1-21 (MPTASASESSSNQPESSNASG) form a disordered region. CoA contacts are provided by residues 221-224 (RRGK), threonine 339, and asparagine 363. ATP-binding positions include 415–417 (GEG), 439–444 (DTWWQT), aspartate 528, and arginine 543. Serine 551 lines the CoA pocket. Arginine 554 is an ATP binding site. Valine 565, histidine 567, and valine 570 together coordinate Mg(2+). Arginine 611 contributes to the CoA binding site. An N6-acetyllysine modification is found at lysine 636.

Belongs to the ATP-dependent AMP-binding enzyme family. Mg(2+) is required as a cofactor. Acetylated. Deacetylation by the SIR2-homolog deacetylase activates the enzyme.

It carries out the reaction acetate + ATP + CoA = acetyl-CoA + AMP + diphosphate. In terms of biological role, catalyzes the conversion of acetate into acetyl-CoA (AcCoA), an essential intermediate at the junction of anabolic and catabolic pathways. AcsA undergoes a two-step reaction. In the first half reaction, AcsA combines acetate with ATP to form acetyl-adenylate (AcAMP) intermediate. In the second half reaction, it can then transfer the acetyl group from AcAMP to the sulfhydryl group of CoA, forming the product AcCoA. This Rhodopirellula baltica (strain DSM 10527 / NCIMB 13988 / SH1) protein is Acetyl-coenzyme A synthetase.